Reading from the N-terminus, the 656-residue chain is NADH-ubiquinone oxidoreductase chain 5 (656 aa).

The next 17 helical transmembrane spans lie at 5–23, 30–52, 81–103, 112–129, 133–155, 168–190, 200–222, 243–262, 272–294, 301–320, 324–346, 367–389, 409–431, 452–471, 514–536, 607–629, and 634–653; these read IIILPVLGSIVAGFFGRKL, IITCSCVIVTTILALLAWVEVGF, LTVSMLLPVLIISSLVHIYSISY, RFFSYLSLFTFMMIILVT, YLLMFVGWEGVGVCSYLLVSFWF, FLTNRVGDCFLTIGMFAILWSLG, LAPYINENIITIIGICLVIGAMA, VSALIHAATMVTAGVYLLMR, TVLLICLWLGAITTVFSSLVGLF, VIAYSTMSQLGLMVVAIGLS, IALFHLVNHAFYKAALFLGAGSI, PLTYSIILIASLSLAAFPFLTGF, SVYAISTIGAIFTTLYSVKVIYL, IFLTLPLVILAIFSIFFGYL, FIFTVLFSILAILLSEFIPGSVF, LSTGVVTSYALYILLGLISFIII, and QISSSLIVLLIILTLFSLNF.

Belongs to the complex I subunit 5 family.

The protein resides in the mitochondrion inner membrane. The catalysed reaction is a ubiquinone + NADH + 5 H(+)(in) = a ubiquinol + NAD(+) + 4 H(+)(out). In terms of biological role, core subunit of the mitochondrial membrane respiratory chain NADH dehydrogenase (Complex I) that is believed to belong to the minimal assembly required for catalysis. Complex I functions in the transfer of electrons from NADH to the respiratory chain. The immediate electron acceptor for the enzyme is believed to be ubiquinone. The chain is NADH-ubiquinone oxidoreductase chain 5 (ND5) from Cryphonectria parasitica (Chestnut blight fungus).